The chain runs to 416 residues: MFSKSVTLAQYDPDLAAAIAQEDRRQQDHVELIASENYVSCAVMEAQGSQLTNKYAEGYPAKRYYGGCEYVDIVEQLAIDRVKELFGAAYANVQPHSGSQANQAVYASVLKPGDTILGMSLAHGGHLTHGASVNISGKLYNAVTYGLDENEVLDYAEVERLALEHKPKMIVAGASAYALQIDWAKFREIADKVGAYLFVDMAHYAGLVAGGEYPNPVPFCDFVTTTTHKTLRGPRGGVILCRDNTHEKALNSSIFPSLQGGPLMHVIAAKAVAFKEALQPEFKQYAKQVKINAAVMAEELVKRGLRIVSGRTESHVFLVDLQPMKITGKAAEAALGKAHITVNKNAIPNDPEKPFVTSGIRIGSAAMTTRGFNETDARVLSNLVADVLANPEDEANLAKVCGQVTALCDKYPVYGN.

(6S)-5,6,7,8-tetrahydrofolate contacts are provided by residues L121 and 125–127 (GHL). K229 bears the N6-(pyridoxal phosphate)lysine mark.

This sequence belongs to the SHMT family. Homodimer. The cofactor is pyridoxal 5'-phosphate.

The protein resides in the cytoplasm. The enzyme catalyses (6R)-5,10-methylene-5,6,7,8-tetrahydrofolate + glycine + H2O = (6S)-5,6,7,8-tetrahydrofolate + L-serine. Its pathway is one-carbon metabolism; tetrahydrofolate interconversion. The protein operates within amino-acid biosynthesis; glycine biosynthesis; glycine from L-serine: step 1/1. Catalyzes the reversible interconversion of serine and glycine with tetrahydrofolate (THF) serving as the one-carbon carrier. This reaction serves as the major source of one-carbon groups required for the biosynthesis of purines, thymidylate, methionine, and other important biomolecules. Also exhibits THF-independent aldolase activity toward beta-hydroxyamino acids, producing glycine and aldehydes, via a retro-aldol mechanism. In Neisseria gonorrhoeae, this protein is Serine hydroxymethyltransferase.